A 258-amino-acid chain; its full sequence is Synapse differentiation-inducing gene protein 1 (258 aa).

Over 1 to 181 the chain is Cytoplasmic; sequence MDGIIEQKSV…NFLMMPPRDH (181 aa). At Ser-137 the chain carries Phosphoserine. The chain crosses the membrane as a helical span at residues 182-202; it reads LGLSVFSMLCCFWPLGIAAFY. Residues 203 to 228 lie on the Extracellular side of the membrane; that stretch reads LSHETNKAVAKGDFHQASTSSRRALF. Residues 229-249 constitute an intramembrane region (helical); the sequence is LAVLSITIGTGIYVGVAVALI. The Extracellular segment spans residues 250 to 258; sequence AYLSKNNHL.

The protein belongs to the CD225/Dispanin family. In terms of assembly, homodimer. Interacts with GRIA1 and GRIA2. As to expression, brain-specific. Expressed in Purkinje neurons in cerebellum. Also detected in the hippocampus. Found at excitatory synapses and postsynaptic cells.

The protein resides in the cell membrane. It localises to the early endosome membrane. It is found in the postsynaptic density membrane. Its subcellular location is the synapse. The protein localises to the cell projection. The protein resides in the dendrite. It localises to the dendritic spine. May regulate AMPA receptor content at nascent synapses, and have a role in postsynaptic development and maturation. This Mus musculus (Mouse) protein is Synapse differentiation-inducing gene protein 1 (Syndig1).